A 321-amino-acid polypeptide reads, in one-letter code: Histidine N-alpha-methyltransferase (321 aa).

Tyrosine 56 lines the L-histidine pocket. S-adenosyl-L-methionine-binding positions include glycine 86, lysine 92, aspartate 113, and aspartate 141–phenylalanine 142. Residues asparagine 166, tyrosine 206, and glutamate 282–serine 284 contribute to the L-histidine site.

The protein belongs to the methyltransferase superfamily. EgtD family. As to quaternary structure, monomer.

It carries out the reaction L-histidine + 3 S-adenosyl-L-methionine = hercynine + 3 S-adenosyl-L-homocysteine + 3 H(+). It participates in amino-acid biosynthesis; ergothioneine biosynthesis. Its function is as follows. Catalyzes the SAM-dependent triple methylation of the alpha-amino group of histidine to form hercynine, a step in the biosynthesis pathway of ergothioneine (ERG). ERG is one of the major redox buffers which protects bacteria against redox stressors and antibiotics; loss of ERG or mycothiol (MSH, the other major redox buffer in this bacteria) leads to respiratory alterations and bioenergetic deficiencies that negatively impact virulence. In Mycobacterium tuberculosis (strain CDC 1551 / Oshkosh), this protein is Histidine N-alpha-methyltransferase (egtD).